The sequence spans 166 residues: Tetranectin-like protein (166 aa).

3 cysteine pairs are disulfide-bonded: Cys37/Cys47, Cys64/Cys160, and Cys136/Cys152. Residues 43–161 (IHKKCYLASR…CRSEKRYICE (119 aa)) enclose the C-type lectin domain.

The chain is Tetranectin-like protein from Carcharhinus perezii (Reef shark).